The sequence spans 153 residues: UPF0756 membrane protein Bcer98_3279 (153 aa).

A run of 4 helical transmembrane segments spans residues 8 to 28 (FLFI…IVAI), 54 to 74 (LGVT…EIGF), 87 to 107 (WIAL…LQLL), and 117 to 137 (LVFG…GPLI).

It belongs to the UPF0756 family.

It localises to the cell membrane. This chain is UPF0756 membrane protein Bcer98_3279, found in Bacillus cytotoxicus (strain DSM 22905 / CIP 110041 / 391-98 / NVH 391-98).